A 1288-amino-acid chain; its full sequence is Probable serine/threonine-protein kinase drkD (1288 aa).

Residues methionine 1–glutamine 12 are compositionally biased toward polar residues. Disordered stretches follow at residues methionine 1 to proline 132, phenylalanine 156 to isoleucine 223, and serine 269 to glutamate 386. Composition is skewed to low complexity over residues threonine 13–serine 79 and phenylalanine 156–proline 220. A coiled-coil region spans residues glutamate 221–lysine 248. Residues glycine 271–asparagine 291 are compositionally biased toward polar residues. Basic and acidic residues predominate over residues proline 302–serine 343. Residues alanine 344–valine 354 show a composition bias toward polar residues. Residues glutamate 376–glutamate 386 show a composition bias toward acidic residues. 7 LRR repeats span residues lysine 400–isoleucine 421, glutamate 423–leucine 444, histidine 446–proline 468, arginine 469–leucine 490, serine 492–histidine 513, asparagine 517–serine 538, and histidine 540–serine 561. Disordered regions lie at residues tryptophan 690–glycine 717, proline 733–glutamine 764, and glutamine 796–glutamine 825. Composition is skewed to polar residues over residues serine 701–glycine 717 and proline 733–asparagine 757. The 254-residue stretch at isoleucine 851–isoleucine 1104 folds into the Protein kinase domain. ATP contacts are provided by residues isoleucine 857–valine 865 and lysine 878. The Proton acceptor role is filled by aspartate 974. Disordered regions lie at residues glycine 1118–alanine 1141 and glutamine 1245–lysine 1288. Low complexity predominate over residues asparagine 1257–asparagine 1268. Over residues serine 1269–methionine 1282 the composition is skewed to polar residues.

It belongs to the protein kinase superfamily. TKL Ser/Thr protein kinase family.

It catalyses the reaction L-seryl-[protein] + ATP = O-phospho-L-seryl-[protein] + ADP + H(+). The enzyme catalyses L-threonyl-[protein] + ATP = O-phospho-L-threonyl-[protein] + ADP + H(+). The protein is Probable serine/threonine-protein kinase drkD (drkD) of Dictyostelium discoideum (Social amoeba).